Reading from the N-terminus, the 426-residue chain is Serine--tRNA ligase (426 aa).

Residue 233-235 (TAE) participates in L-serine binding. 264–266 (RSE) contributes to the ATP binding site. Glu-287 contacts L-serine. 351–354 (EISS) serves as a coordination point for ATP. Ser-387 contributes to the L-serine binding site.

This sequence belongs to the class-II aminoacyl-tRNA synthetase family. Type-1 seryl-tRNA synthetase subfamily. In terms of assembly, homodimer. The tRNA molecule binds across the dimer.

The protein localises to the cytoplasm. The catalysed reaction is tRNA(Ser) + L-serine + ATP = L-seryl-tRNA(Ser) + AMP + diphosphate + H(+). It catalyses the reaction tRNA(Sec) + L-serine + ATP = L-seryl-tRNA(Sec) + AMP + diphosphate + H(+). It participates in aminoacyl-tRNA biosynthesis; selenocysteinyl-tRNA(Sec) biosynthesis; L-seryl-tRNA(Sec) from L-serine and tRNA(Sec): step 1/1. Functionally, catalyzes the attachment of serine to tRNA(Ser). Is also able to aminoacylate tRNA(Sec) with serine, to form the misacylated tRNA L-seryl-tRNA(Sec), which will be further converted into selenocysteinyl-tRNA(Sec). This Pseudomonas putida (strain GB-1) protein is Serine--tRNA ligase.